A 193-amino-acid chain; its full sequence is Small ribosomal subunit protein eS7 (193 aa).

The protein belongs to the eukaryotic ribosomal protein eS7 family.

The sequence is that of Small ribosomal subunit protein eS7 (rps7) from Dictyostelium discoideum (Social amoeba).